The primary structure comprises 923 residues: Meiotic recombination protein rec11 (923 aa).

The SCD domain occupies 278 to 365 (LFSRIHDIRA…DRFSLRIVEI (88 aa)).

The chain is Meiotic recombination protein rec11 (rec11) from Schizosaccharomyces pombe (strain 972 / ATCC 24843) (Fission yeast).